The chain runs to 243 residues: MNASQDTIYAQVSEHISDFQFDSRVAGVFSDMIRRSVPGYTQIINTIGDFADRFVKPNTQVYDLGCSLGAATLSIRRQIQGRDCRIVAVDNSESMVIRCQENLNAYVSDTEVELICGDIRDIHIENASLVVLNFTLQFLPPEDRDALIAKIYQGLNPGGLLVLSEKIRFDDAPIQSVLEELHLDFKRANGYSELEISQKRSALENVMKPDTLSTHQQRLTHQGFSHFSTWFQCFNFASMVAIK.

S-adenosyl-L-methionine contacts are provided by residues Y40, 65 to 67 (GCS), 90 to 91 (DN), 118 to 119 (DI), N133, and R200.

The protein belongs to the class I-like SAM-binding methyltransferase superfamily. Cx-SAM synthase family. In terms of assembly, homodimer.

It carries out the reaction prephenate + S-adenosyl-L-methionine = carboxy-S-adenosyl-L-methionine + 3-phenylpyruvate + H2O. Catalyzes the conversion of S-adenosyl-L-methionine (SAM) to carboxy-S-adenosyl-L-methionine (Cx-SAM). This is Carboxy-S-adenosyl-L-methionine synthase from Shewanella oneidensis (strain ATCC 700550 / JCM 31522 / CIP 106686 / LMG 19005 / NCIMB 14063 / MR-1).